Consider the following 37-residue polypeptide: Cytochrome b6-f complex subunit 5 (37 aa).

Residues 5 to 25 form a helical membrane-spanning segment; sequence LLSGIVLGMITVSAFGLFVAA.

This sequence belongs to the PetG family. The 4 large subunits of the cytochrome b6-f complex are cytochrome b6, subunit IV (17 kDa polypeptide, PetD), cytochrome f and the Rieske protein, while the 4 small subunits are PetG, PetL, PetM and PetN. The complex functions as a dimer.

Its subcellular location is the plastid. It is found in the chloroplast thylakoid membrane. Component of the cytochrome b6-f complex, which mediates electron transfer between photosystem II (PSII) and photosystem I (PSI), cyclic electron flow around PSI, and state transitions. PetG is required for either the stability or assembly of the cytochrome b6-f complex. The protein is Cytochrome b6-f complex subunit 5 of Thalassiosira pseudonana (Marine diatom).